Here is a 161-residue protein sequence, read N- to C-terminus: Nascent polypeptide-associated complex subunit beta (161 aa).

2 disordered regions span residues 14-41 (LSAN…KDDS) and 125-161 (QNAQ…ADVE). Residues 37–102 (NKDDSKLQAQ…PQEKSLQDLF (66 aa)) enclose the NAC-A/B domain. The segment covering 125–134 (QNAQAAAPAT) has biased composition (low complexity). Positions 135-146 (EGHEAGEKKDND) are enriched in basic and acidic residues.

It belongs to the NAC-beta family. Part of the nascent polypeptide-associated complex (NAC), consisting of EGD2 and EGD1. NAC associates with ribosomes via EGD1.

The protein localises to the cytoplasm. Its subcellular location is the nucleus. Functionally, component of the nascent polypeptide-associated complex (NAC), a dynamic component of the ribosomal exit tunnel, protecting the emerging polypeptides from interaction with other cytoplasmic proteins to ensure appropriate nascent protein targeting. The NAC complex also promotes mitochondrial protein import by enhancing productive ribosome interactions with the outer mitochondrial membrane and blocks the inappropriate interaction of ribosomes translating non-secretory nascent polypeptides with translocation sites in the membrane of the endoplasmic reticulum. EGD1 may act as a transcription factor that exert a negative effect on the expression of several genes that are transcribed by RNA polymerase II. This is Nascent polypeptide-associated complex subunit beta (EGD1) from Eremothecium gossypii (strain ATCC 10895 / CBS 109.51 / FGSC 9923 / NRRL Y-1056) (Yeast).